A 371-amino-acid polypeptide reads, in one-letter code: Phospho-N-acetylmuramoyl-pentapeptide-transferase (371 aa).

Helical transmembrane passes span 25 to 45 (TLLA…WLIA), 77 to 94 (MGGL…ALWA), 136 to 156 (IGWQ…HPAS), 172 to 192 (LIPH…IVGF), 204 to 224 (GLAI…AYVA), 240 to 260 (GTGE…AFLW), 269 to 289 (FMGD…AFMI), 296 to 316 (VIVG…VGVF), and 348 to 368 (KVVL…LATL).

Belongs to the glycosyltransferase 4 family. MraY subfamily. Requires Mg(2+) as cofactor.

The protein resides in the cell inner membrane. The catalysed reaction is UDP-N-acetyl-alpha-D-muramoyl-L-alanyl-gamma-D-glutamyl-meso-2,6-diaminopimeloyl-D-alanyl-D-alanine + di-trans,octa-cis-undecaprenyl phosphate = di-trans,octa-cis-undecaprenyl diphospho-N-acetyl-alpha-D-muramoyl-L-alanyl-D-glutamyl-meso-2,6-diaminopimeloyl-D-alanyl-D-alanine + UMP. It functions in the pathway cell wall biogenesis; peptidoglycan biosynthesis. Catalyzes the initial step of the lipid cycle reactions in the biosynthesis of the cell wall peptidoglycan: transfers peptidoglycan precursor phospho-MurNAc-pentapeptide from UDP-MurNAc-pentapeptide onto the lipid carrier undecaprenyl phosphate, yielding undecaprenyl-pyrophosphoryl-MurNAc-pentapeptide, known as lipid I. This chain is Phospho-N-acetylmuramoyl-pentapeptide-transferase, found in Opitutus terrae (strain DSM 11246 / JCM 15787 / PB90-1).